The chain runs to 298 residues: N-acetylmuramic acid 6-phosphate etherase (298 aa).

The region spanning 55–218 (ITESLRRGGR…STASMVRLGK (164 aa)) is the SIS domain. E83 serves as the catalytic Proton donor. E114 is a catalytic residue.

The protein belongs to the GCKR-like family. MurNAc-6-P etherase subfamily. In terms of assembly, homodimer.

It carries out the reaction N-acetyl-D-muramate 6-phosphate + H2O = N-acetyl-D-glucosamine 6-phosphate + (R)-lactate. It participates in amino-sugar metabolism; N-acetylmuramate degradation. In terms of biological role, specifically catalyzes the cleavage of the D-lactyl ether substituent of MurNAc 6-phosphate, producing GlcNAc 6-phosphate and D-lactate. The sequence is that of N-acetylmuramic acid 6-phosphate etherase from Mycolicibacterium smegmatis (strain ATCC 700084 / mc(2)155) (Mycobacterium smegmatis).